Reading from the N-terminus, the 867-residue chain is Xylosyltransferase 2 (867 aa).

Over 1–15 (MVASARVQKLVRRYK) the chain is Cytoplasmic. Residues 16 to 36 (LAIATALAILLLQGLVVWSFS) traverse the membrane as a helical; Signal-anchor for type II membrane protein segment. The Lumenal segment spans residues 37 to 867 (VLEDDEPGEK…GPVKADGRLR (831 aa)). The disordered stretch occupies residues 41–122 (DEPGEKGRQK…PPPEAPGRQN (82 aa)). Basic and acidic residues predominate over residues 53 to 65 (RPLDPSEGSKDTD). Residues 73-82 (SAGRRHGRWR) are compositionally biased toward basic residues. A glycan (N-linked (GlcNAc...) asparagine) is linked at Asn-122. Disulfide bonds link Cys-161–Cys-189 and Cys-205–Cys-447. UDP-alpha-D-xylose contacts are provided by residues Val-238, Asp-266, and 295-297 (TIW). An N-linked (GlcNAc...) asparagine glycan is attached at Asn-326. Residues 399-400 (DW), Ser-480, and 503-504 (RK) contribute to the UDP-alpha-D-xylose site. Cystine bridges form between Cys-580–Cys-835 and Cys-828–Cys-841. Residue Asn-685 is glycosylated (N-linked (GlcNAc...) asparagine).

This sequence belongs to the glycosyltransferase 14 family. XylT subfamily. Monomer. It depends on Mg(2+) as a cofactor. Mn(2+) serves as cofactor. Post-translationally, contains disulfide bonds.

It localises to the golgi apparatus membrane. Its subcellular location is the secreted. The enzyme catalyses UDP-alpha-D-xylose + L-seryl-[protein] = 3-O-(beta-D-xylosyl)-L-seryl-[protein] + UDP + H(+). The protein operates within glycan metabolism; chondroitin sulfate biosynthesis. It participates in glycan metabolism; heparan sulfate biosynthesis. Its function is as follows. Catalyzes the first step in the biosynthesis of chondroitin sulfate, heparan sulfate and dermatan sulfate proteoglycans, such as DCN. Transfers D-xylose from UDP-D-xylose to specific serine residues of the core protein. The sequence is that of Xylosyltransferase 2 (XYLT2) from Bos taurus (Bovine).